A 207-amino-acid chain; its full sequence is LexA repressor (207 aa).

A DNA-binding region (H-T-H motif) is located at residues 28-48 (RAEIARELGFRSANAAEEHLK). Residues serine 124 and lysine 161 each act as for autocatalytic cleavage activity in the active site.

The protein belongs to the peptidase S24 family. In terms of assembly, homodimer.

It carries out the reaction Hydrolysis of Ala-|-Gly bond in repressor LexA.. In terms of biological role, represses a number of genes involved in the response to DNA damage (SOS response), including recA and lexA. In the presence of single-stranded DNA, RecA interacts with LexA causing an autocatalytic cleavage which disrupts the DNA-binding part of LexA, leading to derepression of the SOS regulon and eventually DNA repair. This Aliivibrio salmonicida (strain LFI1238) (Vibrio salmonicida (strain LFI1238)) protein is LexA repressor.